Here is a 329-residue protein sequence, read N- to C-terminus: MAISWKEMNELQPRVMKLLYNSIEKDRLSHAYLFEGKKGTGKLDAALLLAKSFFCLEGGAEPCESCRNCKRIESGNHPDLHLVQPDGLSIKKAQIQALQEEFSKTGLESHKKLYIISHADQMTANAANSLLKFLEEPNKDTMAVLITEQPQRLLDTIISRCQTLPFQPLQPKAIEDRLIEQDVSPHMARLLANMTNNVAEAVELSRNDEFAESRAKVIKLYEVLHQRKGHAFFFIQDQWMPFFKEKTHQEMGLDMLLLIYRDVLSIQIGNEDKLIYQDLFQSIKQHALQSTQQSVTNQILAVLEAKKRLHSNVNVQGLMEHLVLMLQEG.

In terms of assembly, component of the DNA clamp loading complex consisting of tau(3):delta(1):delta'(1). The DNA polymerase III holoenzyme complex contains at least 10 different subunits organized into 3 functionally essential subassemblies: the Pol III core, the beta sliding clamp processivity factor and the clamp-loading complex. The Pol III core (subunits alpha, epsilon and theta) contains the polymerase and the 3'-5' exonuclease proofreading activities. The polymerase is tethered to the template via the dimeric beta sliding clamp processivity factor. The DNA clamp-loading complex assembles the beta sliding clamp onto the primed template and plays a central role in the organization and communication at the replication fork.

The protein resides in the cytoplasm. Its subcellular location is the nucleoid. The enzyme catalyses DNA(n) + a 2'-deoxyribonucleoside 5'-triphosphate = DNA(n+1) + diphosphate. In terms of biological role, DNA polymerase III is a complex, multichain enzyme responsible for most of the replicative synthesis in bacteria. The polypeptide is DNA polymerase III subunit delta' (holB) (Bacillus subtilis (strain 168)).